A 418-amino-acid polypeptide reads, in one-letter code: Glutamyl-tRNA reductase (418 aa).

Substrate-binding positions include 49–52 (TCNR), Ser107, 112–114 (EPQ), and Gln118. Cys50 functions as the Nucleophile in the catalytic mechanism. Residue 187–192 (GAGETI) coordinates NADP(+).

It belongs to the glutamyl-tRNA reductase family. In terms of assembly, homodimer.

The enzyme catalyses (S)-4-amino-5-oxopentanoate + tRNA(Glu) + NADP(+) = L-glutamyl-tRNA(Glu) + NADPH + H(+). The protein operates within porphyrin-containing compound metabolism; protoporphyrin-IX biosynthesis; 5-aminolevulinate from L-glutamyl-tRNA(Glu): step 1/2. Functionally, catalyzes the NADPH-dependent reduction of glutamyl-tRNA(Glu) to glutamate 1-semialdehyde (GSA). This chain is Glutamyl-tRNA reductase, found in Vibrio parahaemolyticus serotype O3:K6 (strain RIMD 2210633).